A 40-amino-acid polypeptide reads, in one-letter code: Photosystem II reaction center protein J (40 aa).

A helical transmembrane segment spans residues 8 to 28 (IPLWVVATIAGLGVITVVGIF).

The protein belongs to the PsbJ family. PSII is composed of 1 copy each of membrane proteins PsbA, PsbB, PsbC, PsbD, PsbE, PsbF, PsbH, PsbI, PsbJ, PsbK, PsbL, PsbM, PsbT, PsbX, PsbY, PsbZ, Psb30/Ycf12, peripheral proteins PsbO, CyanoQ (PsbQ), PsbU, PsbV and a large number of cofactors. It forms dimeric complexes.

The protein resides in the cellular thylakoid membrane. Its function is as follows. One of the components of the core complex of photosystem II (PSII). PSII is a light-driven water:plastoquinone oxidoreductase that uses light energy to abstract electrons from H(2)O, generating O(2) and a proton gradient subsequently used for ATP formation. It consists of a core antenna complex that captures photons, and an electron transfer chain that converts photonic excitation into a charge separation. This Trichormus variabilis (strain ATCC 29413 / PCC 7937) (Anabaena variabilis) protein is Photosystem II reaction center protein J.